Here is a 268-residue protein sequence, read N- to C-terminus: Tryptophan synthase alpha chain (268 aa).

Active-site proton acceptor residues include E49 and D60.

It belongs to the TrpA family. Tetramer of two alpha and two beta chains.

It carries out the reaction (1S,2R)-1-C-(indol-3-yl)glycerol 3-phosphate + L-serine = D-glyceraldehyde 3-phosphate + L-tryptophan + H2O. The protein operates within amino-acid biosynthesis; L-tryptophan biosynthesis; L-tryptophan from chorismate: step 5/5. Its function is as follows. The alpha subunit is responsible for the aldol cleavage of indoleglycerol phosphate to indole and glyceraldehyde 3-phosphate. This chain is Tryptophan synthase alpha chain, found in Escherichia coli O139:H28 (strain E24377A / ETEC).